The primary structure comprises 383 residues: Phosphoenolpyruvate/phosphate translocator 2, chloroplastic (383 aa).

The N-terminal 55 residues, Met1–Lys55, are a transit peptide targeting the chloroplast. 8 helical membrane passes run Gly76–Phe96, Ala108–Leu128, Val143–Gly163, Phe179–Cys199, Leu210–Thr232, Ile253–Leu273, Ile299–Leu319, and Val350–Ser369. In terms of domain architecture, EamA spans Tyr93–Ser212.

It belongs to the TPT transporter family. PPT (TC 2.A.7.9) subfamily. Widely expressed in leaves throughout development. In flowers, expressed in sepals and pistils.

Its subcellular location is the plastid. The protein resides in the chloroplast membrane. In terms of biological role, phosphoenolpyruvate/phosphate translocator that transports phosphoenolpyruvate (PEP), 2-phosphoglycerate and 3-phosphoglycerate. This is Phosphoenolpyruvate/phosphate translocator 2, chloroplastic (PPT2) from Arabidopsis thaliana (Mouse-ear cress).